The following is a 541-amino-acid chain: NEDD8-activating enzyme E1 regulatory subunit (541 aa).

It belongs to the ubiquitin-activating E1 family. ULA1 subfamily. In terms of assembly, heterodimer of uba-3 and ula-1. The complex binds NEDD8 and ubc-12.

It participates in protein modification; protein neddylation. Functionally, regulatory subunit of the dimeric uba-3-ula-1 E1 enzyme. E1 activates NEDD8 by first adenylating its C-terminal glycine residue with ATP, thereafter linking this residue to the side chain of the catalytic cysteine, yielding a NEDD8-rfl-1 (uba-3) thioester and free AMP. E1 finally transfers NEDD8 to the catalytic cysteine of ubc-12. Required for rfl-1 (uba-3) nuclear localization during early embryonic development. In Caenorhabditis elegans, this protein is NEDD8-activating enzyme E1 regulatory subunit (ula-1).